We begin with the raw amino-acid sequence, 64 residues long: Large ribosomal subunit protein bL32 (64 aa).

A disordered region spans residues 1 to 35 (MAVQKSRVTPSRRGMRRAHDALSAKQLSTDPTTGE).

The protein belongs to the bacterial ribosomal protein bL32 family.

This is Large ribosomal subunit protein bL32 from Stenotrophomonas maltophilia (strain R551-3).